Here is a 365-residue protein sequence, read N- to C-terminus: Peptide chain release factor 1 (365 aa).

At Gln-240 the chain carries N5-methylglutamine.

Belongs to the prokaryotic/mitochondrial release factor family. Methylated by PrmC. Methylation increases the termination efficiency of RF1.

It localises to the cytoplasm. In terms of biological role, peptide chain release factor 1 directs the termination of translation in response to the peptide chain termination codons UAG and UAA. The polypeptide is Peptide chain release factor 1 (Bifidobacterium animalis subsp. lactis (strain AD011)).